The following is a 332-amino-acid chain: Clavesin-1 (332 aa).

The CRAL-TRIO domain maps to 96–257 (IKRALMDGFP…EFGGTLPPYD (162 aa)). A disordered region spans residues 300–332 (KYMKRSHSVVEPGTLRHEEERENENTQPLLALD). The span at 313–323 (TLRHEEERENE) shows a compositional bias: basic and acidic residues.

The protein resides in the golgi apparatus. It localises to the trans-Golgi network membrane. Its subcellular location is the early endosome membrane. The protein localises to the cytoplasmic vesicle. It is found in the clathrin-coated vesicle. Required for normal morphology of late endosomes and/or lysosomes in neurons. Binds phosphatidylinositol 3,5-bisphosphate (PtdIns(3,5)P2). The polypeptide is Clavesin-1 (clvs1) (Xenopus laevis (African clawed frog)).